We begin with the raw amino-acid sequence, 338 residues long: NADH-quinone oxidoreductase subunit H (338 aa).

8 helical membrane-spanning segments follow: residues 22 to 42 (VVQAVVILLVVVLVAALMSFI), 96 to 116 (VAMATAVLSFMVIPVSPALGV), 121 to 141 (IGLLFFMAMAGIAVYAVLFGG), 161 to 181 (ISYEVFLGISLMGVVAIAGSF), 193 to 213 (VWFIIPQFLGFLIFVVAGVAV), 249 to 269 (YVNVVLISALIVTLFFGGWLA), 277 to 297 (FVPPVFWFVIKTAFFVMMFVL), and 315 to 335 (WKICLPLALVNLLVTGAVILM).

It belongs to the complex I subunit 1 family. As to quaternary structure, NDH-1 is composed of 14 different subunits. Subunits NuoA, H, J, K, L, M, N constitute the membrane sector of the complex.

It localises to the cell inner membrane. The enzyme catalyses a quinone + NADH + 5 H(+)(in) = a quinol + NAD(+) + 4 H(+)(out). Its function is as follows. NDH-1 shuttles electrons from NADH, via FMN and iron-sulfur (Fe-S) centers, to quinones in the respiratory chain. The immediate electron acceptor for the enzyme in this species is believed to be ubiquinone. Couples the redox reaction to proton translocation (for every two electrons transferred, four hydrogen ions are translocated across the cytoplasmic membrane), and thus conserves the redox energy in a proton gradient. This subunit may bind ubiquinone. The polypeptide is NADH-quinone oxidoreductase subunit H (Acinetobacter baumannii (strain ATCC 17978 / DSM 105126 / CIP 53.77 / LMG 1025 / NCDC KC755 / 5377)).